The following is a 2256-amino-acid chain: GON-4-like protein (2256 aa).

3 disordered regions span residues 1-56 (MLPC…DSAG), 105-213 (PSLE…SLGP), and 227-266 (LFIP…MTYD). Positions 23-35 (EDLHLEAAVKPDT) are enriched in basic and acidic residues. Polar residues predominate over residues 40–53 (DCTSESLSWGQSHD). The segment covering 141–176 (TREDGGDHTVPEEPPSGEHAEEVKAEGGELEMHSEG) has biased composition (basic and acidic residues). Basic residues predominate over residues 242–254 (RKKTKKGTKRKRD). A Phosphoserine modification is found at Ser-346. Residues 366–395 (EDDDSSDEEYQPDEEEEDETAEESLLESDV) are compositionally biased toward acidic residues. 3 disordered regions span residues 366–428 (EDDD…VLSE), 441–460 (SAEV…QTRD), and 545–573 (DVEN…DTED). Residues 545-571 (DVENEDEADDDDDPEYNFLEDLDEPDT) show a composition bias toward acidic residues. Positions 609 to 1363 (EMGFSNMEDD…DCMEEISSDF (755 aa)) are required for interaction with YY1, SIN3A and HDAC1, and transcriptional repression activity. Position 783 is a phosphoserine (Ser-783). 2 stretches are compositionally biased toward low complexity: residues 947-959 (TAGG…TETS) and 1094-1115 (PWSE…LPSL). Disordered regions lie at residues 947 to 969 (TAGG…KTSP), 1078 to 1141 (AALP…SPCV), 1241 to 1288 (AEGK…EAVS), and 1360 to 1620 (SSDF…SRAR). The segment covering 1119-1135 (KFRKPYVRRKPTRRKGA) has biased composition (basic residues). Over residues 1364 to 1386 (PKQDIGEEVKEECCMELDRDSPQ) the composition is skewed to basic and acidic residues. 2 stretches are compositionally biased toward polar residues: residues 1387-1401 (EKAS…QTAT) and 1429-1444 (LPQS…TVLN). At Ser-1445 the chain carries Phosphoserine. Residues 1475-1495 (GAEEEEEEDFDDLTQDEEDEL) are compositionally biased toward acidic residues. A compositionally biased stretch (low complexity) spans 1496–1510 (SSASEESVLSVPELQ). The segment covering 1529–1553 (GESEEENSQEENSEPEEEEEEEAEG) has biased composition (acidic residues). Basic residues predominate over residues 1606–1620 (RSSHRARSRRGSRAR). PAH domains follow at residues 1644–1716 (EQKD…LLPE) and 1726–1797 (EQQA…FDHL). Disordered regions lie at residues 1831 to 1886 (VEEE…LKKS) and 1909 to 1966 (LELV…APIP). Positions 1851-1868 (EIGVQHQDKESEWPEAAK) are enriched in basic and acidic residues. Phosphoserine is present on residues Ser-1921 and Ser-1994. 2 disordered regions span residues 2050-2078 (PETS…STRD) and 2110-2148 (IRGT…VLPK). The span at 2111-2129 (RGTSSGASASEAAPTASRE) shows a compositional bias: low complexity. A Myb-like domain is found at 2163–2216 (STGEKVVLWTREADRVILTMCQEQGAQPHTFSVISQQLGNKTPVEVSHRFRELM). Residues 2223–2256 (CEASSEDEDDATSTSNADQLSDHGDLLSEEELDE) are disordered.

In terms of assembly, found in a complex with YY1, SIN3A and HDAC1.

It is found in the nucleus. Has transcriptional repressor activity, probably as part of a complex with YY1, SIN3A and HDAC1. Required for B cell lymphopoiesis. This Rattus norvegicus (Rat) protein is GON-4-like protein (Gon4l).